An 83-amino-acid polypeptide reads, in one-letter code: Cytochrome b559 subunit alpha (83 aa).

Residues 22–36 form a helical membrane-spanning segment; sequence VIHAVTLPAIFLAGF. His24 contacts heme.

This sequence belongs to the PsbE/PsbF family. In terms of assembly, heterodimer of an alpha subunit and a beta subunit. PSII is composed of 1 copy each of membrane proteins PsbA, PsbB, PsbC, PsbD, PsbE, PsbF, PsbH, PsbI, PsbJ, PsbK, PsbL, PsbM, PsbT, PsbX, PsbY, PsbZ, Psb30/Ycf12, peripheral proteins PsbO, CyanoQ (PsbQ), PsbU, PsbV and a large number of cofactors. It forms dimeric complexes. It depends on heme b as a cofactor.

The protein resides in the cellular thylakoid membrane. Its function is as follows. This b-type cytochrome is tightly associated with the reaction center of photosystem II (PSII). PSII is a light-driven water:plastoquinone oxidoreductase that uses light energy to abstract electrons from H(2)O, generating O(2) and a proton gradient subsequently used for ATP formation. It consists of a core antenna complex that captures photons, and an electron transfer chain that converts photonic excitation into a charge separation. This Synechococcus sp. (strain RCC307) protein is Cytochrome b559 subunit alpha.